An 80-amino-acid polypeptide reads, in one-letter code: Small ribosomal subunit protein bS18 (80 aa).

This sequence belongs to the bacterial ribosomal protein bS18 family. In terms of assembly, part of the 30S ribosomal subunit. Forms a tight heterodimer with protein bS6.

Binds as a heterodimer with protein bS6 to the central domain of the 16S rRNA, where it helps stabilize the platform of the 30S subunit. The sequence is that of Small ribosomal subunit protein bS18 from Methylocella silvestris (strain DSM 15510 / CIP 108128 / LMG 27833 / NCIMB 13906 / BL2).